Consider the following 165-residue polypeptide: Putative 4-hydroxy-4-methyl-2-oxoglutarate aldolase (165 aa).

Substrate-binding positions include 80 to 83 (GGNL) and arginine 102. Aspartate 103 is a binding site for a divalent metal cation.

It belongs to the class II aldolase/RraA-like family. In terms of assembly, homotrimer. The cofactor is a divalent metal cation.

It carries out the reaction 4-hydroxy-4-methyl-2-oxoglutarate = 2 pyruvate. The enzyme catalyses oxaloacetate + H(+) = pyruvate + CO2. Functionally, catalyzes the aldol cleavage of 4-hydroxy-4-methyl-2-oxoglutarate (HMG) into 2 molecules of pyruvate. Also contains a secondary oxaloacetate (OAA) decarboxylase activity due to the common pyruvate enolate transition state formed following C-C bond cleavage in the retro-aldol and decarboxylation reactions. The polypeptide is Putative 4-hydroxy-4-methyl-2-oxoglutarate aldolase (Burkholderia mallei (strain NCTC 10247)).